The primary structure comprises 240 residues: CRISPR-associated protein Cas5 3 (240 aa).

It belongs to the CRISPR-associated protein Cas5 family. Subtype I-A/Apern subfamily. As to quaternary structure, part of the aCascade ribonucleoprotein complex.

Functionally, CRISPR (clustered regularly interspaced short palindromic repeat) is an adaptive immune system that provides protection against mobile genetic elements (viruses, transposable elements and conjugative plasmids). CRISPR clusters contain spacers, sequences complementary to antecedent mobile elements, and target invading nucleic acids. CRISPR clusters are transcribed and processed into CRISPR RNA (crRNA). The polypeptide is CRISPR-associated protein Cas5 3 (cas5c) (Saccharolobus solfataricus (strain ATCC 35092 / DSM 1617 / JCM 11322 / P2) (Sulfolobus solfataricus)).